Here is a 570-residue protein sequence, read N- to C-terminus: MSEKYPGPLVVEGKLSDAERMKRESNFLRGTIAEDLHDGLTGGFNGDNFLLIRFHGMYQQDDRDIRAERAAQKLEPRHAMMLRCRLPGGIMTPQQWLAIDKFAEENTIYGSIRLTNRQTFQYHGLLKKNVKPAHQMLHSVGLDALATANDMNRNVLCTSNPVESQLHAEAYEWAKKLSEHLLPRTRAYAEIWLDQEKVATTDEEPILGATYLPRKFKTTVVVPPQNDVDLHANDMNFVAIAENGKLVGFNLLVGGGLSIEHGNKKTYARTATEFGYIPLEHTLAVAEAVVTTQRDWGNRTDRKNAKTKYTLERVGPDVFKAEVERRAGVTFEPVRPYEFTGRGDRIGWVKGIDDKWHLTLFIENGRILDFPDKPLKTGLKEIARIHKGDFRLTANQNLIVAGVPEGDKAKIEQIARAHGLMAGVTPQRENSMACVSFPTCPLAMAEAERFLPQFIDKVDGIMAKHGLAEEHIVLRVTGCPNGCGRAMLAELGLVGKAPGRYNLHLGGNRIGTRIPRMYRENITESEILDNIDELVGRWAQEREPGEGFGDFTVRAGIIRPVLDPARDFWE.

[4Fe-4S] cluster contacts are provided by cysteine 434, cysteine 440, cysteine 479, and cysteine 483. Residue cysteine 483 participates in siroheme binding.

Belongs to the nitrite and sulfite reductase 4Fe-4S domain family. Alpha(8)-beta(8). The alpha component is a flavoprotein, the beta component is a hemoprotein. Siroheme is required as a cofactor. [4Fe-4S] cluster serves as cofactor.

It catalyses the reaction hydrogen sulfide + 3 NADP(+) + 3 H2O = sulfite + 3 NADPH + 4 H(+). It functions in the pathway sulfur metabolism; hydrogen sulfide biosynthesis; hydrogen sulfide from sulfite (NADPH route): step 1/1. Its function is as follows. Component of the sulfite reductase complex that catalyzes the 6-electron reduction of sulfite to sulfide. This is one of several activities required for the biosynthesis of L-cysteine from sulfate. This chain is Sulfite reductase [NADPH] hemoprotein beta-component, found in Cronobacter sakazakii (strain ATCC BAA-894) (Enterobacter sakazakii).